A 320-amino-acid polypeptide reads, in one-letter code: Transcription factor bHLH34 (320 aa).

Residues 162–213 (SKPGTKACREKLRREKLNDKFMDLSSVLEPGRTPKTDKSAILDDAIRVVNQL) enclose the bHLH domain. The disordered stretch occupies residues 299 to 320 (WSPLPPADRDTSRDLKNLPPVA). Basic and acidic residues predominate over residues 305–314 (ADRDTSRDLK).

As to quaternary structure, homodimer. Expressed constitutively in roots, leaves, stems, and flowers.

The protein resides in the nucleus. The chain is Transcription factor bHLH34 (BHLH34) from Arabidopsis thaliana (Mouse-ear cress).